We begin with the raw amino-acid sequence, 445 residues long: Probable phosphoglucosamine mutase (445 aa).

Catalysis depends on S99, which acts as the Phosphoserine intermediate. Positions 99, 238, 240, and 242 each coordinate Mg(2+). The residue at position 99 (S99) is a Phosphoserine.

This sequence belongs to the phosphohexose mutase family. Mg(2+) serves as cofactor. Post-translationally, activated by phosphorylation.

It catalyses the reaction alpha-D-glucosamine 1-phosphate = D-glucosamine 6-phosphate. Functionally, catalyzes the conversion of glucosamine-6-phosphate to glucosamine-1-phosphate. This Methanobrevibacter smithii (strain ATCC 35061 / DSM 861 / OCM 144 / PS) protein is Probable phosphoglucosamine mutase.